Reading from the N-terminus, the 424-residue chain is Zinc finger protein 597 (424 aa).

The KRAB domain occupies 14–88 (ILFEDLAVYF…KYPIAAPLVP (75 aa)). C2H2-type zinc fingers lie at residues 156–178 (YKCPECDQNFSDHSYLVLHQKIH), 184–206 (HKCGDCGKIFNHRANLRTHRRIH), 212–234 (YKCAKCSASFRQHSHLSRHMNSH), and 240–262 (YTCSICGRGFMWLPGLAQHQKSH). A Glycyl lysine isopeptide (Lys-Gly) (interchain with G-Cter in SUMO2) cross-link involves residue K300. 3 C2H2-type zinc fingers span residues 341 to 363 (LQCPDCDMTFPCFSELISHQNIH), 369 to 391 (HKCKTCEESFALDSELACHQKSH), and 397 to 419 (FKCTVCGKTFKSNLHLITHKRTH).

Belongs to the krueppel C2H2-type zinc-finger protein family.

It is found in the nucleus. May be involved in transcriptional regulation. In Homo sapiens (Human), this protein is Zinc finger protein 597 (ZNF597).